A 157-amino-acid polypeptide reads, in one-letter code: Class I hydrophobin rodA (157 aa).

The signal sequence occupies residues 1-41; it reads MKFSIAAAVVAFAASVAALPPAHDSQFAGNGVGNKGNSNVK. N47 carries N-linked (GlcNAc...) asparagine glycosylation. 4 disulfide bridges follow: C57-C131, C65-C125, C66-C106, and C132-C150.

Belongs to the fungal hydrophobin family. In terms of assembly, self-assembles to form functional amyloid fibrils called rodlets. Self-assembly into fibrillar rodlets occurs spontaneously at hydrophobic:hydrophilic interfaces and the rodlets further associate laterally to form amphipathic monolayers.

The protein resides in the secreted. It localises to the spore wall. Aerial growth, conidiation, and dispersal of filamentous fungi in the environment rely upon a capability of their secreting small amphipathic proteins called hydrophobins (HPBs) with low sequence identity. Class I can self-assemble into an outermost layer of rodlet bundles on aerial cell surfaces, conferring cellular hydrophobicity that supports fungal growth, development and dispersal; whereas Class II form highly ordered films at water-air interfaces through intermolecular interactions but contribute nothing to the rodlet structure. RodA is a class I hydrophobin that contributes to surface hydrophobicity, which is important for processes such as association of hyphae in reproductive structures, dispersal of aerial spores and adhesion of pathogens to host structures. Important for the formation of hydrophobic rodlet layers of asexually-produced spores. Promotes also biofilm formation and may enhance lignocellulose utilization via promoting a compact substrate-enzyme-fungus structure. This chain is Class I hydrophobin rodA, found in Emericella nidulans (strain FGSC A4 / ATCC 38163 / CBS 112.46 / NRRL 194 / M139) (Aspergillus nidulans).